Consider the following 915-residue polypeptide: Mitogen-activated protein kinase kinae kinase MST11 (915 aa).

Disordered regions lie at residues 1 to 65 (MAML…PKHW), 134 to 171 (KKRNRDSFAGHESMYTPVSESPSKPFHSSSRVMPNPSV), and 183 to 249 (GMAY…TRTD). Residues 26-45 (AQASYPPSRRAPAVPPASQS) show a composition bias toward low complexity. The SAM domain occupies 65–128 (WDEDKVCEYL…FLSIKKLRTK (64 aa)). Composition is skewed to low complexity over residues 152 to 163 (SESPSKPFHSSS) and 188 to 203 (PSRPTTSSRPTSPLPS). Residues 263–353 (NQDVIRVIST…NRLILRRVPA (91 aa)) form the Ras-associating domain. Positions 641 to 911 (WMKGALIGQG…ADDLMLSPFL (271 aa)) constitute a Protein kinase domain. ATP-binding positions include 647–655 (IGQGSFGCV) and Lys670.

Belongs to the protein kinase superfamily. STE Ser/Thr protein kinase family. MAP kinase kinase kinase subfamily. Interacts with the adapter protein MST50.

It carries out the reaction L-seryl-[protein] + ATP = O-phospho-L-seryl-[protein] + ADP + H(+). The enzyme catalyses L-threonyl-[protein] + ATP = O-phospho-L-threonyl-[protein] + ADP + H(+). Functionally, mitogen-activated protein kinase kinase kinase; part of the MST11-MST7-PMK1 MAP kinase (MAPK) cascade that is essential for appressorium formation, penetration and invasive growth. The MST11-MST7-PMK1 MAP kinase cascade transduces signals from the cell surface sensors MDB2 and SHO1 that recognize various surface signals such as surface hydrophobicity, cutin monomers, and rice leaf waxes. MST11 acts as the upstream MAPKKK that directly phosphorylates MAPKK MST7. MST11 but not MST7 may also be involved in the OSM1 MAPK pathway in response to osmotic stresses. This chain is Mitogen-activated protein kinase kinae kinase MST11, found in Pyricularia oryzae (strain 70-15 / ATCC MYA-4617 / FGSC 8958) (Rice blast fungus).